Here is a 439-residue protein sequence, read N- to C-terminus: Taxadien-5-alpha-ol O-acetyltransferase (439 aa).

Catalysis depends on proton acceptor residues histidine 164 and aspartate 373.

Belongs to the plant acyltransferase family.

The enzyme catalyses taxa-4(20),11-dien-5alpha-ol + acetyl-CoA = taxa-4(20),11-dien-5alpha-yl acetate + CoA. It participates in alkaloid biosynthesis; taxol biosynthesis; 10-deacetyl-2-debenzoylbaccatin III from taxa-4(20),11-dien-5alpha-ol: step 1/3. In Taxus cuspidata (Japanese yew), this protein is Taxadien-5-alpha-ol O-acetyltransferase (TAT).